Consider the following 114-residue polypeptide: Protein ORF3 (114 aa).

2 hydrophobic regions span residues 6–24 (WALG…CCSR) and 33–53 (AVVG…GLIL). The tract at residues 28 to 68 (VSRLAAVVGGAAAVPAVVSGVTGLILSPSQSPIFIQPTPSP) is interaction with host HPX. An interaction with the capsid protein region spans residues 48 to 72 (VTGLILSPSQSPIFIQPTPSPRMSP). Serine 71 carries the phosphoserine; by host modification. The segment at 72–114 (PLRPGLDLVFANPSDHSAPLGATRPSAPPLPHVVDLPQLGPRR) is homodimerization, and interaction with host AMBP/bikunin. Residues 85-114 (SDHSAPLGATRPSAPPLPHVVDLPQLGPRR) are disordered. The tract at residues 95 to 104 (RPSAPPLPHV) is interaction with host SRC, HCK, FYN, PIK3R3 and GRB2. The short motif at 96–99 (PSAP) is the PTAP/PSAP motif element.

It belongs to the hepevirus ORF3 protein family. Forms homooligomers. Interacts with host SRC, HCK, FYN, PIK3R3 and GRB2 (via SH3 domain); binding does not activate the kinases. Interacts with host AMBP/bikunin and AMBP/alpha-1-microglobulin peptides. Interacts with host HPX/hemopexin. Interacts (when phosphorylated) with capsid protein ORF2. Interacts with host TSG101; this interaction plays a role in viral release from the host cell. Interacts with host SIRPA; this interaction down-regulates the phosphorylation of host IRF3. Palmitoylated in the N-terminus.

It is found in the host endoplasmic reticulum membrane. Its subcellular location is the host cytoplasm. It localises to the host cytoskeleton. The protein localises to the virion. The protein resides in the host cell membrane. Small multifunctional phosphoprotein involved in virion morphogenesis, egress and counteracting host innate immunity. Plays critical roles in the final steps of viral release by interacting with host TSG101, a member of the vacuolar protein-sorting pathway and using other cellular host proteins involved in vesicle formation pathway. Also acts as a viroporin and forms ion conductive pores allowing viral particle release. Impairs the generation of type I interferon by down-regulating host TLR3 and TLR7 as well as their downstream signaling pathways. Down-regulates the phosphorylation of host IRF3 via the interaction with host SIRP-alpha, thereby inhibiting IFN-I expression. Interacts with host microtubules. This Hepatitis E virus genotype 1 (isolate Human/India/Hyderabad) (HEV-1) protein is Protein ORF3.